The primary structure comprises 343 residues: GTPase Obg (343 aa).

In terms of domain architecture, Obg spans methionine 1 to isoleucine 159. The 169-residue stretch at alanine 160 to alanine 328 folds into the OBG-type G domain. Residues glycine 166–serine 173, phenylalanine 191–histidine 195, aspartate 213–glycine 216, asparagine 280–aspartate 283, and serine 309–valine 311 contribute to the GTP site. Mg(2+) is bound by residues serine 173 and threonine 193.

Belongs to the TRAFAC class OBG-HflX-like GTPase superfamily. OBG GTPase family. Monomer. It depends on Mg(2+) as a cofactor.

The protein localises to the cytoplasm. Its function is as follows. An essential GTPase which binds GTP, GDP and possibly (p)ppGpp with moderate affinity, with high nucleotide exchange rates and a fairly low GTP hydrolysis rate. Plays a role in control of the cell cycle, stress response, ribosome biogenesis and in those bacteria that undergo differentiation, in morphogenesis control. The sequence is that of GTPase Obg from Granulibacter bethesdensis (strain ATCC BAA-1260 / CGDNIH1).